A 200-amino-acid polypeptide reads, in one-letter code: Guanylate kinase (200 aa).

The Guanylate kinase-like domain maps to 4–183 (GAVLIISGPS…AKEAMVAIAR (180 aa)). 11-18 (GPSGCGKS) contributes to the ATP binding site.

The protein belongs to the guanylate kinase family.

It localises to the cytoplasm. The enzyme catalyses GMP + ATP = GDP + ADP. Essential for recycling GMP and indirectly, cGMP. The protein is Guanylate kinase of Helicobacter hepaticus (strain ATCC 51449 / 3B1).